A 431-amino-acid chain; its full sequence is Na(+)-translocating NADH-quinone reductase subunit F (431 aa).

The helical transmembrane segment at I10–L30 threads the bilayer. The 2Fe-2S ferredoxin-type domain maps to C41–Y133. [2Fe-2S] cluster contacts are provided by C76, C82, C85, and C117. Positions A136–K286 constitute an FAD-binding FR-type domain. Residues N289 to L413 are catalytic.

It belongs to the NqrF family. Composed of six subunits; NqrA, NqrB, NqrC, NqrD, NqrE and NqrF. [2Fe-2S] cluster serves as cofactor. The cofactor is FAD.

The protein localises to the cell inner membrane. The catalysed reaction is a ubiquinone + n Na(+)(in) + NADH + H(+) = a ubiquinol + n Na(+)(out) + NAD(+). In terms of biological role, NQR complex catalyzes the reduction of ubiquinone-1 to ubiquinol by two successive reactions, coupled with the transport of Na(+) ions from the cytoplasm to the periplasm. The first step is catalyzed by NqrF, which accepts electrons from NADH and reduces ubiquinone-1 to ubisemiquinone by a one-electron transfer pathway. This is Na(+)-translocating NADH-quinone reductase subunit F from Chlamydia muridarum (strain MoPn / Nigg).